A 372-amino-acid chain; its full sequence is Probable dual-specificity RNA methyltransferase RlmN (372 aa).

Residues 1-20 are disordered; sequence MTSLPLTPVNPDAPARRAAM. Glutamate 112 serves as the catalytic Proton acceptor. Positions 118–357 constitute a Radical SAM core domain; it reads YPDRVTVCLS…STTVRDTRGR (240 aa). The cysteines at positions 125 and 363 are disulfide-linked. The [4Fe-4S] cluster site is built by cysteine 132, cysteine 136, and cysteine 139. S-adenosyl-L-methionine contacts are provided by residues 187–188, serine 221, 244–246, and asparagine 320; these read GE and SLH. Cysteine 363 acts as the S-methylcysteine intermediate in catalysis.

Belongs to the radical SAM superfamily. RlmN family. [4Fe-4S] cluster is required as a cofactor.

It is found in the cytoplasm. The enzyme catalyses adenosine(2503) in 23S rRNA + 2 reduced [2Fe-2S]-[ferredoxin] + 2 S-adenosyl-L-methionine = 2-methyladenosine(2503) in 23S rRNA + 5'-deoxyadenosine + L-methionine + 2 oxidized [2Fe-2S]-[ferredoxin] + S-adenosyl-L-homocysteine. It catalyses the reaction adenosine(37) in tRNA + 2 reduced [2Fe-2S]-[ferredoxin] + 2 S-adenosyl-L-methionine = 2-methyladenosine(37) in tRNA + 5'-deoxyadenosine + L-methionine + 2 oxidized [2Fe-2S]-[ferredoxin] + S-adenosyl-L-homocysteine. Specifically methylates position 2 of adenine 2503 in 23S rRNA and position 2 of adenine 37 in tRNAs. The sequence is that of Probable dual-specificity RNA methyltransferase RlmN from Salinispora tropica (strain ATCC BAA-916 / DSM 44818 / JCM 13857 / NBRC 105044 / CNB-440).